The primary structure comprises 455 residues: 3-phosphoshikimate 1-carboxyvinyltransferase (455 aa).

The segment covering 1-19 has biased composition (polar residues); it reads MSHGASSRPATARKSSGLS. Residues 1-25 form a disordered region; sequence MSHGASSRPATARKSSGLSGTVRIP. A phosphoenolpyruvate-binding site is contributed by K28. Positions 29 and 33 each coordinate 3-phosphoshikimate. R128 is a binding site for phosphoenolpyruvate. The 3-phosphoshikimate site is built by S173, A174, Q175, D326, and K353. Q175 contacts phosphoenolpyruvate. Catalysis depends on D326, which acts as the Proton acceptor. Residues R357 and R405 each contribute to the phosphoenolpyruvate site.

The protein belongs to the EPSP synthase family. In terms of assembly, monomer.

It localises to the cytoplasm. It catalyses the reaction 3-phosphoshikimate + phosphoenolpyruvate = 5-O-(1-carboxyvinyl)-3-phosphoshikimate + phosphate. It participates in metabolic intermediate biosynthesis; chorismate biosynthesis; chorismate from D-erythrose 4-phosphate and phosphoenolpyruvate: step 6/7. Is resistant to inhibition by glyphosate (glyphosate-tolerant) like other members of class II EPSPS, in contrast to class I EPSPS, which is glyphosate-sensitive. Is much less sensitive to inhibition by the (R)-difluoromethyl and (R)-phosphonate analogs of the tetrahedral reaction intermediate than the representative class I EPSPS from E.coli. Is highly activated in the presence of cations, such as NH4(+), Rb(+), and K(+). Its function is as follows. Catalyzes the transfer of the enolpyruvyl moiety of phosphoenolpyruvate (PEP) to the 5-hydroxyl of shikimate-3-phosphate (S3P) to produce enolpyruvyl shikimate-3-phosphate and inorganic phosphate. The sequence is that of 3-phosphoshikimate 1-carboxyvinyltransferase from Agrobacterium sp. (strain CP4).